The chain runs to 901 residues: Bifunctional protein STORR (901 aa).

The chain crosses the membrane as a helical span at residues 12–32 (TSSVVALLLALVSILSSVVVL). C513 provides a ligand contact to heme.

In the N-terminal section; belongs to the cytochrome P450 family. The protein in the C-terminal section; belongs to the aldo/keto reductase family. Heme serves as cofactor.

It is found in the membrane. The catalysed reaction is (R)-reticuline + NADP(+) = 1,2-dehydroreticuline + NADPH + H(+). It catalyses the reaction (S)-reticuline + reduced [NADPH--hemoprotein reductase] + O2 = 1,2-dehydroreticuline + oxidized [NADPH--hemoprotein reductase] + 2 H2O + H(+). Its pathway is alkaloid biosynthesis; morphine biosynthesis. Bifunctional protein involved in the biosynthesis of morphinan-type benzylisoquinoline alkaloids. Required for the isomerization of (S)- to (R)-reticuline. The cytochrome P450 module is responsible for the conversion of (S)-reticuline to 1,2-dehydroreticuline while the oxidoreductase module converts 1,2-dehydroreticuline to (R)-reticuline. The protein is Bifunctional protein STORR of Papaver somniferum (Opium poppy).